We begin with the raw amino-acid sequence, 234 residues long: Small ribosomal subunit protein uS3 (234 aa).

Residues Ile39–Arg107 form the KH type-2 domain. The segment covering Pro213–Ser222 has biased composition (basic and acidic residues). Residues Pro213–Lys234 are disordered. Basic residues predominate over residues Lys223 to Lys234.

This sequence belongs to the universal ribosomal protein uS3 family. As to quaternary structure, part of the 30S ribosomal subunit. Forms a tight complex with proteins S10 and S14.

Its function is as follows. Binds the lower part of the 30S subunit head. Binds mRNA in the 70S ribosome, positioning it for translation. This Aliarcobacter butzleri (strain RM4018) (Arcobacter butzleri) protein is Small ribosomal subunit protein uS3.